Here is a 456-residue protein sequence, read N- to C-terminus: Kynurenine 3-monooxygenase (456 aa).

The protein belongs to the aromatic-ring hydroxylase family. KMO subfamily. FAD serves as cofactor.

Its subcellular location is the mitochondrion outer membrane. The enzyme catalyses L-kynurenine + NADPH + O2 + H(+) = 3-hydroxy-L-kynurenine + NADP(+) + H2O. It participates in cofactor biosynthesis; NAD(+) biosynthesis; quinolinate from L-kynurenine: step 1/3. In terms of biological role, catalyzes the hydroxylation of L-kynurenine (L-Kyn) to form 3-hydroxy-L-kynurenine (L-3OHKyn). Required for synthesis of quinolinic acid. This chain is Kynurenine 3-monooxygenase, found in Candida albicans (strain SC5314 / ATCC MYA-2876) (Yeast).